The following is a 489-amino-acid chain: Retinoblastoma-binding protein 5 homolog (489 aa).

WD repeat units lie at residues Asp-22–Ser-63, Ala-64–Lys-103, Asp-147–Ser-187, Ser-195–Lys-234, Val-248–His-290, and Thr-292–Ala-330. Residues Asp-451 to Lys-489 form a disordered region.

In terms of assembly, core component of several methyltransferase-containing complexes. Component of the SET1 complex, composed at least of the catalytic subunit Set1, wds/WDR5, Wdr82, Rbbp5, ash2, Cfp1/CXXC1, hcf and Dpy-30L1. Component of the MLL3/4 complex composed at least of the catalytic subunit trr, ash2, Rbbp5, Dpy-30L1, wds, hcf, ptip, Pa1, Utx, Lpt and Ncoa6.

The protein resides in the nucleus. Its function is as follows. Component of the SET1 complex that specifically di- and trimethylates 'Lys-4' of histone H3 and of the MLL3/4 complex which also methylates histone H3 'Lys-4'. This Drosophila melanogaster (Fruit fly) protein is Retinoblastoma-binding protein 5 homolog.